A 177-amino-acid chain; its full sequence is Large ribosomal subunit protein uL6 (177 aa).

This sequence belongs to the universal ribosomal protein uL6 family. As to quaternary structure, part of the 50S ribosomal subunit.

Functionally, this protein binds to the 23S rRNA, and is important in its secondary structure. It is located near the subunit interface in the base of the L7/L12 stalk, and near the tRNA binding site of the peptidyltransferase center. This chain is Large ribosomal subunit protein uL6, found in Variovorax paradoxus (strain S110).